A 610-amino-acid chain; its full sequence is UvrABC system protein C (610 aa).

Residues 16 to 94 form the GIY-YIG domain; sequence SQPGVYRMYD…IKLYQPRYNV (79 aa). One can recognise a UVR domain in the interval 204–239; it reads DQVLTQLIARMEKASQDLAFEEAARIRDQIQAVRRV.

This sequence belongs to the UvrC family. Interacts with UvrB in an incision complex.

The protein localises to the cytoplasm. Functionally, the UvrABC repair system catalyzes the recognition and processing of DNA lesions. UvrC both incises the 5' and 3' sides of the lesion. The N-terminal half is responsible for the 3' incision and the C-terminal half is responsible for the 5' incision. The chain is UvrABC system protein C from Salmonella agona (strain SL483).